The chain runs to 247 residues: ATP synthase subunit a, chloroplastic (247 aa).

5 helical membrane-spanning segments follow: residues 38-58, 95-115, 134-154, 199-219, and 220-240; these read QVLI…TIAV, VPFI…GALL, INTT…AGFT, LVVV…VMFL, and GLFT…AYIG.

This sequence belongs to the ATPase A chain family. F-type ATPases have 2 components, CF(1) - the catalytic core - and CF(0) - the membrane proton channel. CF(1) has five subunits: alpha(3), beta(3), gamma(1), delta(1), epsilon(1). CF(0) has four main subunits: a, b, b' and c.

It is found in the plastid. It localises to the chloroplast thylakoid membrane. In terms of biological role, key component of the proton channel; it plays a direct role in the translocation of protons across the membrane. This Liriodendron tulipifera (Tuliptree) protein is ATP synthase subunit a, chloroplastic.